Reading from the N-terminus, the 411-residue chain is Gamma-glutamyl phosphate reductase (411 aa).

It belongs to the gamma-glutamyl phosphate reductase family.

Its subcellular location is the cytoplasm. The enzyme catalyses L-glutamate 5-semialdehyde + phosphate + NADP(+) = L-glutamyl 5-phosphate + NADPH + H(+). It participates in amino-acid biosynthesis; L-proline biosynthesis; L-glutamate 5-semialdehyde from L-glutamate: step 2/2. In terms of biological role, catalyzes the NADPH-dependent reduction of L-glutamate 5-phosphate into L-glutamate 5-semialdehyde and phosphate. The product spontaneously undergoes cyclization to form 1-pyrroline-5-carboxylate. The polypeptide is Gamma-glutamyl phosphate reductase (Wolinella succinogenes (strain ATCC 29543 / DSM 1740 / CCUG 13145 / JCM 31913 / LMG 7466 / NCTC 11488 / FDC 602W) (Vibrio succinogenes)).